Here is a 312-residue protein sequence, read N- to C-terminus: 2-phospho-L-lactate transferase (312 aa).

D50 and K89 together coordinate 7,8-didemethyl-8-hydroxy-5-deazariboflavin.

This sequence belongs to the CofD family. Homodimer. Mg(2+) serves as cofactor.

The enzyme catalyses (2S)-lactyl-2-diphospho-5'-guanosine + 7,8-didemethyl-8-hydroxy-5-deazariboflavin = oxidized coenzyme F420-0 + GMP + H(+). It functions in the pathway cofactor biosynthesis; coenzyme F420 biosynthesis. Its function is as follows. Catalyzes the transfer of the 2-phospholactate moiety from (2S)-lactyl-2-diphospho-5'-guanosine to 7,8-didemethyl-8-hydroxy-5-deazariboflavin (FO) with the formation of oxidized coenzyme F420-0 and GMP. The protein is 2-phospho-L-lactate transferase of Methanococcus vannielii (strain ATCC 35089 / DSM 1224 / JCM 13029 / OCM 148 / SB).